A 156-amino-acid chain; its full sequence is uncharacterized protein (156 aa).

2 helical membrane-spanning segments follow: residues 46–66 (GLVL…AGVV) and 114–134 (IIDI…IVAL).

It localises to the cell membrane. This is an uncharacterized protein from Haemophilus influenzae (strain ATCC 51907 / DSM 11121 / KW20 / Rd).